The primary structure comprises 209 residues: Large ribosomal subunit protein uL3 (209 aa).

The segment at 121-154 (GGIKRHNFHRGPMAHGSKYHRRPGSSAAKGPART) is disordered.

It belongs to the universal ribosomal protein uL3 family. As to quaternary structure, part of the 50S ribosomal subunit. Forms a cluster with proteins L14 and L19.

In terms of biological role, one of the primary rRNA binding proteins, it binds directly near the 3'-end of the 23S rRNA, where it nucleates assembly of the 50S subunit. In Desulforamulus reducens (strain ATCC BAA-1160 / DSM 100696 / MI-1) (Desulfotomaculum reducens), this protein is Large ribosomal subunit protein uL3.